The chain runs to 361 residues: Mitogen-activated protein kinase 14A (361 aa).

The Protein kinase domain maps to 25-309 (YQNLSPVGSG…AAEALAHPYF (285 aa)). Residues 31 to 39 (VGSGAYGSV) and K54 each bind ATP. The Proton acceptor role is filled by D169. Position 181 is a phosphothreonine; by MAP2K3 (T181). Residues 181-183 (TGY) carry the TXY motif. A Phosphotyrosine; by MAP2K3 modification is found at Y183.

Belongs to the protein kinase superfamily. CMGC Ser/Thr protein kinase family. MAP kinase subfamily. Mg(2+) is required as a cofactor. In terms of processing, dually phosphorylated on Thr-181 and Tyr-183, which activates the enzyme.

The protein localises to the cytoplasm. Its subcellular location is the nucleus. It carries out the reaction L-seryl-[protein] + ATP = O-phospho-L-seryl-[protein] + ADP + H(+). The enzyme catalyses L-threonyl-[protein] + ATP = O-phospho-L-threonyl-[protein] + ADP + H(+). With respect to regulation, activated by threonine and tyrosine phosphorylation by the dual specificity kinase, MKK3. Functionally, serine/threonine kinase which acts as an essential component of the MAP kinase signal transduction pathway. Mapk14a is one of the four p38 MAPKs which play an important role in the cascades of cellular responses evoked by extracellular stimuli such as pro-inflammatory cytokines or physical stress leading to direct activation of transcription factors. Accordingly, p38 MAPKs phosphorylate a broad range of proteins and it has been estimated that they may have approximately 200 to 300 substrates each. Some of the targets are downstream kinases which are activated through phosphorylation and further phosphorylate additional targets. Required for cytokinesis on the future dorsal side of the blastodisc, suggesting a role in symmetrical and synchronous blastomere cleavage. The sequence is that of Mitogen-activated protein kinase 14A (mapk14a) from Danio rerio (Zebrafish).